Here is a 612-residue protein sequence, read N- to C-terminus: uncharacterized protein (612 aa).

In terms of domain architecture, J spans 8-75 (ELYLALGLPK…SKKEIYDNFG (68 aa)). Residues 445 to 465 (AVFWGLVFPITSILGVEQFFL) form a helical membrane-spanning segment.

This sequence belongs to the DnaJ family.

The protein localises to the membrane. This is an uncharacterized protein from Schizosaccharomyces pombe (strain 972 / ATCC 24843) (Fission yeast).